The following is a 108-amino-acid chain: BH3-like motif-containing cell death inducer (108 aa).

A BH3-like motif is present at residues 5-12 (LPIEGQEI).

Ubiquitously expressed.

It is found in the cytoplasm. The protein resides in the mitochondrion. Functionally, functions as a proapoptotic molecule through the caspase-dependent mitochondrial pathway of cell death. The sequence is that of BH3-like motif-containing cell death inducer (BLID) from Homo sapiens (Human).